A 609-amino-acid chain; its full sequence is Coiled-coil domain-containing protein 93 (609 aa).

Coiled coils occupy residues 229 to 459 (KGEV…IAIL) and 510 to 579 (LEKE…LLEK).

The protein belongs to the CCDC93 family.

It is found in the early endosome. Its function is as follows. May be involved in copper-dependent atp7a trafficking between the trans-Golgi network and vesicles in the cell periphery. The chain is Coiled-coil domain-containing protein 93 (ccdc93) from Xenopus laevis (African clawed frog).